A 355-amino-acid chain; its full sequence is Heat-inducible transcription repressor HrcA (355 aa).

Belongs to the HrcA family.

In terms of biological role, negative regulator of class I heat shock genes (grpE-dnaK-dnaJ and groELS operons). Prevents heat-shock induction of these operons. In Prosthecochloris aestuarii (strain DSM 271 / SK 413), this protein is Heat-inducible transcription repressor HrcA.